We begin with the raw amino-acid sequence, 207 residues long: uncharacterized protein (207 aa).

It localises to the mitochondrion. This is an uncharacterized protein from Marchantia polymorpha (Common liverwort).